Consider the following 336-residue polypeptide: MSAKMYYDRDVDTQVLENKLIAIIGYGSQAHAHAQNLRDSGFNVVVGLREGSSSKAKAEQAGLRVASIEDATKEADVVMLLIPDEQQPAVYEKSIAPHLTAGKALAFGHGFNVHFGRIKPPADVDVFLVAPKGPGHMLRRVYTDGAGMPGIFAVQQDASGKARDIALAYARGIGCTKAGVLETTFKEETETDLFGEQSVLCGGVTHLIQAGFETLVEAGYQPEIAYFETLHEVKLIVDLIYEKGFEGMRHSISNTAEFGDYVTGPRIITDQTKAEMKNVLGDIQSGKFAESFIKDAESGFPYMNEQRSKMRDHTVEKVGKELRDQMPFINKKELEV.

The KARI N-terminal Rossmann domain occupies 3 to 183; it reads AKMYYDRDVD…GCTKAGVLET (181 aa). NADP(+)-binding positions include 26-29, Arg-49, Ser-52, Ser-54, and 84-87; these read YGSQ and DEQQ. Residue His-109 is part of the active site. Residue Gly-135 coordinates NADP(+). In terms of domain architecture, KARI C-terminal knotted spans 184 to 329; sequence TFKEETETDL…KELRDQMPFI (146 aa). Asp-192, Glu-196, Glu-228, and Glu-232 together coordinate Mg(2+). Ser-253 serves as a coordination point for substrate.

It belongs to the ketol-acid reductoisomerase family. The cofactor is Mg(2+).

The enzyme catalyses (2R)-2,3-dihydroxy-3-methylbutanoate + NADP(+) = (2S)-2-acetolactate + NADPH + H(+). The catalysed reaction is (2R,3R)-2,3-dihydroxy-3-methylpentanoate + NADP(+) = (S)-2-ethyl-2-hydroxy-3-oxobutanoate + NADPH + H(+). It participates in amino-acid biosynthesis; L-isoleucine biosynthesis; L-isoleucine from 2-oxobutanoate: step 2/4. It functions in the pathway amino-acid biosynthesis; L-valine biosynthesis; L-valine from pyruvate: step 2/4. In terms of biological role, involved in the biosynthesis of branched-chain amino acids (BCAA). Catalyzes an alkyl-migration followed by a ketol-acid reduction of (S)-2-acetolactate (S2AL) to yield (R)-2,3-dihydroxy-isovalerate. In the isomerase reaction, S2AL is rearranged via a Mg-dependent methyl migration to produce 3-hydroxy-3-methyl-2-ketobutyrate (HMKB). In the reductase reaction, this 2-ketoacid undergoes a metal-dependent reduction by NADPH to yield (R)-2,3-dihydroxy-isovalerate. In Deinococcus radiodurans (strain ATCC 13939 / DSM 20539 / JCM 16871 / CCUG 27074 / LMG 4051 / NBRC 15346 / NCIMB 9279 / VKM B-1422 / R1), this protein is Ketol-acid reductoisomerase (NADP(+)).